We begin with the raw amino-acid sequence, 461 residues long: Homocitrate synthase (461 aa).

The Pyruvate carboxyltransferase domain occupies 4–259 (VGILDSTLRE…IEVVKLDKLQ (256 aa)). Arg12 contacts 2-oxoglutarate. Glu13 contacts Mg(2+). 2-oxoglutarate-binding residues include His76, Arg136, and Thr170. Residues His198 and His200 each contribute to the Mg(2+) site. The active-site Proton acceptor is His292.

It belongs to the alpha-IPM synthase/homocitrate synthase family. Homocitrate synthase LYS20/LYS21 subfamily. Mg(2+) serves as cofactor. Requires Mn(2+) as cofactor.

It catalyses the reaction acetyl-CoA + 2-oxoglutarate + H2O = (2R)-homocitrate + CoA + H(+). The protein operates within amino-acid biosynthesis; L-lysine biosynthesis via AAA pathway; L-alpha-aminoadipate from 2-oxoglutarate: step 1/5. Functionally, catalyzes the aldol-type condensation of 2-oxoglutarate with acetyl-CoA to yield homocitrate. Carries out the first step of the alpha-aminoadipate (AAA) lysine biosynthesis pathway. This chain is Homocitrate synthase, found in Saccharolobus islandicus (strain L.S.2.15 / Lassen #1) (Sulfolobus islandicus).